The sequence spans 407 residues: Protein COS9 (407 aa).

Helical transmembrane passes span 75–95 (TWLL…IKSI), 98–118 (IFPF…LPNI), and 261–281 (IFNL…YVSW).

Belongs to the DUP/COS family.

It is found in the membrane. This chain is Protein COS9 (COS9), found in Saccharomyces cerevisiae (strain ATCC 204508 / S288c) (Baker's yeast).